Consider the following 388-residue polypeptide: Protochlorophyllide reductase A, chloroplastic (388 aa).

Residues 1 to 74 constitute a chloroplast transit peptide; the sequence is MALQLLPSTL…SPSGKKTLRQ (74 aa). Low complexity predominate over residues 48-68; the sequence is VATAPSPVTTSPGSTASSPSG. Residues 48–69 form a disordered region; sequence VATAPSPVTTSPGSTASSPSGK.

It belongs to the short-chain dehydrogenases/reductases (SDR) family. POR subfamily.

Its subcellular location is the plastid. It localises to the chloroplast. It carries out the reaction chlorophyllide a + NADP(+) = protochlorophyllide a + NADPH + H(+). Its pathway is porphyrin-containing compound metabolism; chlorophyll biosynthesis. Phototransformation of protochlorophyllide (Pchlide) to chlorophyllide (Chlide). The sequence is that of Protochlorophyllide reductase A, chloroplastic (PORA) from Hordeum vulgare (Barley).